We begin with the raw amino-acid sequence, 500 residues long: Palmitoleoyl-protein carboxylesterase notum1a (500 aa).

The N-terminal stretch at 1-26 (MKRSLWVMQVLHWAVMLALVQCGALG) is a signal peptide. Asn101 carries N-linked (GlcNAc...) asparagine glycosylation. Active-site charge relay system residues include Ser237, Asp344, and His393.

Belongs to the pectinacetylesterase family. Notum subfamily.

Its subcellular location is the secreted. It carries out the reaction [Wnt protein]-O-(9Z)-hexadecenoyl-L-serine + H2O = [Wnt protein]-L-serine + (9Z)-hexadecenoate + H(+). Carboxylesterase that acts as a key negative regulator of the Wnt signaling pathway. Acts by specifically mediating depalmitoleoylation of WNT proteins. Serine palmitoleoylation of WNT proteins is required for efficient binding to frizzled receptors. This Danio rerio (Zebrafish) protein is Palmitoleoyl-protein carboxylesterase notum1a.